Here is a 148-residue protein sequence, read N- to C-terminus: Receptor activity-modifying protein 1 (148 aa).

A signal peptide spans 1–26 (MARALCRLPRRGLWLLLAHHLFMTTA). 3 disulfides stabilise this stretch: Cys27–Cys82, Cys40–Cys72, and Cys57–Cys104. Over 27–118 (CQEANYGALL…RAVRDPPGSI (92 aa)) the chain is Extracellular. The chain crosses the membrane as a helical span at residues 119 to 140 (LYPFIVVPITVTLLVTALVVWQ). Residues 141–148 (SKRTEGIV) are Cytoplasmic-facing.

The protein belongs to the RAMP family. In terms of assembly, heterodimer of CALCRL and RAMP1; the interaction induces allosteric modulation of CALCRL function and CGRP1/CALCA and CGRP2/CALCB ligand specificity. Heterodimer of CALCR and RAMP1; interaction forms the AMYR1 receptor complex for amylin/IAPP and CGRP1/CALCA ligands. Expressed in many tissues including the uterus, bladder, brain, pancreas and gastro-intestinal tract.

It is found in the cell membrane. Its function is as follows. Accessory protein that interacts with and modulates the function of G-protein coupled receptors including calcitonin gene-related peptide type 1 receptor (CALCRL) and calcitonin receptor (CALCR). Required for the transport of CALCRL to the plasma membrane. Together with CALCRL, form the receptor complex for the calcitonin gene-related peptides CGRP1/CALCA and CGRP2/CALCB. Together with CALCR, form the AMYR1 receptor complex for amylin/IAPP and CGRP1/CALCA. The protein is Receptor activity-modifying protein 1 of Homo sapiens (Human).